The sequence spans 447 residues: Tubulin beta chain (447 aa).

Residues glutamine 11, glutamate 69, serine 138, glycine 142, threonine 143, glycine 144, asparagine 204, and asparagine 226 each coordinate GTP. Glutamate 69 contacts Mg(2+). Residues 421-447 (EYQQYQDASISEGEEEYEEEAPMEPEE) form a disordered region. Residues 432 to 447 (EGEEEYEEEAPMEPEE) are compositionally biased toward acidic residues.

This sequence belongs to the tubulin family. As to quaternary structure, dimer of alpha and beta chains. A typical microtubule is a hollow water-filled tube with an outer diameter of 25 nm and an inner diameter of 15 nM. Alpha-beta heterodimers associate head-to-tail to form protofilaments running lengthwise along the microtubule wall with the beta-tubulin subunit facing the microtubule plus end conferring a structural polarity. Microtubules usually have 13 protofilaments but different protofilament numbers can be found in some organisms and specialized cells. Requires Mg(2+) as cofactor.

It is found in the cytoplasm. Its subcellular location is the cytoskeleton. Functionally, tubulin is the major constituent of microtubules, a cylinder consisting of laterally associated linear protofilaments composed of alpha- and beta-tubulin heterodimers. Microtubules grow by the addition of GTP-tubulin dimers to the microtubule end, where a stabilizing cap forms. Below the cap, tubulin dimers are in GDP-bound state, owing to GTPase activity of alpha-tubulin. This is Tubulin beta chain from Rhynchosporium secalis (Barley scald fungus).